The chain runs to 194 residues: Phosphoheptose isomerase (194 aa).

One can recognise an SIS domain in the interval 37 to 194 (ISDSFKQGGK…LIEFEMAKDV (158 aa)). 52–54 (NGG) contributes to the substrate binding site. His61 and Glu65 together coordinate Zn(2+). Substrate-binding positions include Glu65, 93 to 94 (ND), 119 to 121 (STS), Ser124, and Gln172. Residues Gln172 and His180 each contribute to the Zn(2+) site.

The protein belongs to the SIS family. GmhA subfamily. As to quaternary structure, homotetramer. It depends on Zn(2+) as a cofactor.

It localises to the cytoplasm. The enzyme catalyses 2 D-sedoheptulose 7-phosphate = D-glycero-alpha-D-manno-heptose 7-phosphate + D-glycero-beta-D-manno-heptose 7-phosphate. It participates in carbohydrate biosynthesis; D-glycero-D-manno-heptose 7-phosphate biosynthesis; D-glycero-alpha-D-manno-heptose 7-phosphate and D-glycero-beta-D-manno-heptose 7-phosphate from sedoheptulose 7-phosphate: step 1/1. In terms of biological role, catalyzes the isomerization of sedoheptulose 7-phosphate in D-glycero-D-manno-heptose 7-phosphate. In Actinobacillus succinogenes (strain ATCC 55618 / DSM 22257 / CCUG 43843 / 130Z), this protein is Phosphoheptose isomerase.